A 239-amino-acid polypeptide reads, in one-letter code: Norbelladine 4'-O-methyltransferase 2 (239 aa).

S-adenosyl-L-methionine-binding positions include Val55, Glu77, 79 to 80 (GV), Ser85, Asp103, and Ala132. Residue Asp155 participates in a divalent metal cation binding. Asp157 serves as a coordination point for S-adenosyl-L-methionine. A divalent metal cation-binding residues include Asp181 and Asn182.

Belongs to the class I-like SAM-binding methyltransferase superfamily. Cation-dependent O-methyltransferase family. It depends on Mg(2+) as a cofactor.

It catalyses the reaction norbelladine + S-adenosyl-L-methionine = 4'-O-methylnorbelladine + S-adenosyl-L-homocysteine + H(+). Its pathway is alkaloid biosynthesis. In terms of biological role, 4'-O-methyltransferase converting norbelladine to 4'-O-methylnorbelladine. 4'-O-methylnorbelladine is a precursor to all Amaryllidaceae alkaloids such as galanthamine, lycorine and haemanthamine, and including haemanthamine- and crinamine-type alkaloids, promising anticancer agents. This chain is Norbelladine 4'-O-methyltransferase 2, found in Narcissus aff. pseudonarcissus MK-2014 (Daffodil).